Reading from the N-terminus, the 420-residue chain is Glycogen synthase kinase-3 beta (420 aa).

The segment covering 1-22 has biased composition (polar residues); it reads MSGRPRTTSFAESCKPVQQPSA. The disordered stretch occupies residues 1 to 53; it reads MSGRPRTTSFAESCKPVQQPSAFGSMKVSRDKDGSKVTTVVATPGQGPDRPQE. Ser-9 is subject to Phosphoserine; by PKB/AKT1, RPS6KA3 and SGK3. Cys-14 carries the S-palmitoyl cysteine lipid modification. The 285-residue stretch at 56-340 folds into the Protein kinase domain; the sequence is YTDTKVIGNG…PLEACAHSFF (285 aa). ATP-binding positions include 62-70 and Lys-85; that span reads IGNGSFGVV. Asp-181 acts as the Proton acceptor in catalysis. Position 216 is a phosphotyrosine (Tyr-216). Over residues 386–401 the composition is skewed to low complexity; that stretch reads AAASTPTNATAASDAN. Positions 386 to 420 are disordered; it reads AAASTPTNATAASDANTGDRGQTNNAASASASNST. A Phosphoserine modification is found at Ser-389. Residues Thr-390 and Thr-402 each carry the phosphothreonine modification. Residues 409–420 are compositionally biased toward low complexity; it reads NNAASASASNST.

It belongs to the protein kinase superfamily. CMGC Ser/Thr protein kinase family. GSK-3 subfamily. In terms of assembly, monomer. Interacts with ARRB2, DISC1 and ZBED3. Interacts with CABYR, MMP2, MUC1, NIN and PRUNE1. Interacts with AXIN1; the interaction mediates hyperphosphorylation of CTNNB1 leading to its ubiquitination and destruction. Interacts with and phosphorylates SNAI1. Interacts with DNM1L (via a C-terminal domain). Found in a complex composed of MACF1, APC, AXIN1, CTNNB1 and GSK3B. Interacts with SGK3. Interacts with DAB2IP (via C2 domain); the interaction stimulates GSK3B kinase activation. Interacts (via C2 domain) with PPP2CA. Interacts with the CLOCK-BMAL1 heterodimer. Interacts with the BMAL1. Interacts with CTNND2. Interacts with NCYM. The complex composed, at least, of APC, CTNNB1 and GSK3B interacts with JPT1; the interaction requires the inactive form of GSK3B (phosphorylated at 'Ser-9'). Forms a complex composed of PRKAR2A or PRKAR2B, GSK3B and GSKIP through GSKIP interaction; facilitates PKA-induced phosphorylation and regulates GSK3B activity. Interacts with GSKIP. Interacts with GID8. Interacts with PIWIL2. Interacts with LMBR1L. Interacts with DDX3X. Interacts with BIRC2. Interacts with TNFRSF10B; TNFRSF10B stimulation inhibits GSK3B kinase activity. Interacts with RICTOR; the interaction results in phosphorylation of RICTOR at 'Thr-1695' by GSK3B which facilitates FBXW7-mediated ubiquitination and subsequent degradation of RICTOR. Found in a complex with SLC39A6, SLC39A10 and with GSK3B that controls NCAM1 phosphorylation. Interacts with PKP3 (via ARM repeats); the interaction may be involved in PKP3 protein degradation. Post-translationally, phosphorylated by AKT1 and ILK1. Upon insulin-mediated signaling, the activated PKB/AKT1 protein kinase phosphorylates and deactivates GSK3B, resulting in the dephosphorylation and activation of GYS1. Activated by phosphorylation at Tyr-216. Inactivated by phosphorylation at Ser-9. Phosphorylated in a circadian manner in the hippocampus. In terms of processing, mono-ADP-ribosylation by PARP10 negatively regulates kinase activity. Palmitoylated. Palmitoylation by ZDHHC4 prevents AKT1-mediated phosphorylation. As to expression, expressed in testis, thymus, prostate and ovary and weakly expressed in lung, brain and kidney. Colocalizes with EIF2AK2/PKR and TAU in the Alzheimer disease (AD) brain.

It localises to the cytoplasm. The protein localises to the nucleus. The protein resides in the cell membrane. The enzyme catalyses L-seryl-[tau protein] + ATP = O-phospho-L-seryl-[tau protein] + ADP + H(+). It catalyses the reaction L-threonyl-[tau protein] + ATP = O-phospho-L-threonyl-[tau protein] + ADP + H(+). It carries out the reaction L-seryl-[protein] + ATP = O-phospho-L-seryl-[protein] + ADP + H(+). The catalysed reaction is L-threonyl-[protein] + ATP = O-phospho-L-threonyl-[protein] + ADP + H(+). With respect to regulation, activated by phosphorylation at Tyr-216. In response to insulin, inhibited by phosphorylation at Ser-9 by PKB/AKT1 and RPS6KA3; phosphorylation at this site causes a conformational change, preventing access of substrates to the active site. Inhibited by IL22 treatment which also triggers phosphorylation at Ser-9, promoting inactivation. Inhibited by lithium. Functionally, constitutively active protein kinase that acts as a negative regulator in the hormonal control of glucose homeostasis, Wnt signaling and regulation of transcription factors and microtubules, by phosphorylating and inactivating glycogen synthase (GYS1 or GYS2), EIF2B, CTNNB1/beta-catenin, APC, AXIN1, DPYSL2/CRMP2, JUN, NFATC1/NFATC, MAPT/TAU and MACF1. Requires primed phosphorylation of the majority of its substrates. In skeletal muscle, contributes to insulin regulation of glycogen synthesis by phosphorylating and inhibiting GYS1 activity and hence glycogen synthesis. May also mediate the development of insulin resistance by regulating activation of transcription factors. Regulates protein synthesis by controlling the activity of initiation factor 2B (EIF2BE/EIF2B5) in the same manner as glycogen synthase. In Wnt signaling, GSK3B forms a multimeric complex with APC, AXIN1 and CTNNB1/beta-catenin and phosphorylates the N-terminus of CTNNB1 leading to its degradation mediated by ubiquitin/proteasomes. Phosphorylates JUN at sites proximal to its DNA-binding domain, thereby reducing its affinity for DNA. Phosphorylates NFATC1/NFATC on conserved serine residues promoting NFATC1/NFATC nuclear export, shutting off NFATC1/NFATC gene regulation, and thereby opposing the action of calcineurin. Phosphorylates MAPT/TAU on 'Thr-548', decreasing significantly MAPT/TAU ability to bind and stabilize microtubules. MAPT/TAU is the principal component of neurofibrillary tangles in Alzheimer disease. Plays an important role in ERBB2-dependent stabilization of microtubules at the cell cortex. Phosphorylates MACF1, inhibiting its binding to microtubules which is critical for its role in bulge stem cell migration and skin wound repair. Probably regulates NF-kappa-B (NFKB1) at the transcriptional level and is required for the NF-kappa-B-mediated anti-apoptotic response to TNF-alpha (TNF/TNFA). Negatively regulates replication in pancreatic beta-cells, resulting in apoptosis, loss of beta-cells and diabetes. Through phosphorylation of the anti-apoptotic protein MCL1, may control cell apoptosis in response to growth factors deprivation. Phosphorylates MUC1 in breast cancer cells, decreasing the interaction of MUC1 with CTNNB1/beta-catenin. Is necessary for the establishment of neuronal polarity and axon outgrowth. Phosphorylates MARK2, leading to inhibition of its activity. Phosphorylates SIK1 at 'Thr-182', leading to sustainment of its activity. Phosphorylates ZC3HAV1 which enhances its antiviral activity. Phosphorylates SNAI1, leading to its ubiquitination and proteasomal degradation. Phosphorylates SFPQ at 'Thr-687' upon T-cell activation. Phosphorylates NR1D1 st 'Ser-55' and 'Ser-59' and stabilizes it by protecting it from proteasomal degradation. Regulates the circadian clock via phosphorylation of the major clock components including BMAL1, CLOCK and PER2. Phosphorylates FBXL2 at 'Thr-404' and primes it for ubiquitination by the SCF(FBXO3) complex and proteasomal degradation. Phosphorylates CLOCK AT 'Ser-427' and targets it for proteasomal degradation. Phosphorylates BMAL1 at 'Ser-17' and 'Ser-21' and primes it for ubiquitination and proteasomal degradation. Phosphorylates OGT at 'Ser-3' or 'Ser-4' which positively regulates its activity. Phosphorylates MYCN in neuroblastoma cells which may promote its degradation. Regulates the circadian rhythmicity of hippocampal long-term potentiation and BMAL1 and PER2 expression. Acts as a regulator of autophagy by mediating phosphorylation of KAT5/TIP60 under starvation conditions, activating KAT5/TIP60 acetyltransferase activity and promoting acetylation of key autophagy regulators, such as ULK1 and RUBCNL/Pacer. Negatively regulates extrinsic apoptotic signaling pathway via death domain receptors. Promotes the formation of an anti-apoptotic complex, made of DDX3X, BRIC2 and GSK3B, at death receptors, including TNFRSF10B. The anti-apoptotic function is most effective with weak apoptotic signals and can be overcome by stronger stimulation. Phosphorylates E2F1, promoting the interaction between E2F1 and USP11, stabilizing E2F1 and promoting its activity. Phosphorylates mTORC2 complex component RICTOR at 'Ser-1235' in response to endoplasmic stress, inhibiting mTORC2. Phosphorylates mTORC2 complex component RICTOR at 'Thr-1695' which facilitates FBXW7-mediated ubiquitination and subsequent degradation of RICTOR. Phosphorylates FXR1, promoting FXR1 ubiquitination by the SCF(FBXO4) complex and FXR1 degradation by the proteasome. Phosphorylates interleukin-22 receptor subunit IL22RA1, preventing its proteasomal degradation. The polypeptide is Glycogen synthase kinase-3 beta (Homo sapiens (Human)).